Reading from the N-terminus, the 90-residue chain is Small ribosomal subunit protein bS16 (90 aa).

Belongs to the bacterial ribosomal protein bS16 family.

This Listeria monocytogenes serotype 4b (strain F2365) protein is Small ribosomal subunit protein bS16.